Here is a 526-residue protein sequence, read N- to C-terminus: Peptide chain release factor 3 (526 aa).

One can recognise a tr-type G domain in the interval 8–277 (GKRRTFAIIS…GLTEWAPAPQ (270 aa)). GTP-binding positions include 17 to 24 (SHPDAGKT), 85 to 89 (DTPGH), and 139 to 142 (NKMD).

The protein belongs to the TRAFAC class translation factor GTPase superfamily. Classic translation factor GTPase family. PrfC subfamily.

The protein localises to the cytoplasm. Increases the formation of ribosomal termination complexes and stimulates activities of RF-1 and RF-2. It binds guanine nucleotides and has strong preference for UGA stop codons. It may interact directly with the ribosome. The stimulation of RF-1 and RF-2 is significantly reduced by GTP and GDP, but not by GMP. This chain is Peptide chain release factor 3, found in Aliivibrio salmonicida (strain LFI1238) (Vibrio salmonicida (strain LFI1238)).